Consider the following 261-residue polypeptide: Cytochrome c oxidase subunit 3 (261 aa).

The Mitochondrial matrix portion of the chain corresponds to 1–15 (MTRQTHAYHMVNPSP). Residues 16-34 (WPLTGALSALLMTSGLIMW) form a helical membrane-spanning segment. Topologically, residues 35–40 (FHFNST) are mitochondrial intermembrane. A helical membrane pass occupies residues 41-66 (ILLMLGLTTNMLTMYQWWRDVIREST). Topologically, residues 67 to 72 (FQGHHT) are mitochondrial matrix. A helical transmembrane segment spans residues 73–105 (PNVQKGLRYGMILFIISEVLFFTGFFWAFYHSS). Residues 106-128 (LAPTPELGGCWPPTGIHPLNPLE) are Mitochondrial intermembrane-facing. A helical membrane pass occupies residues 129-152 (VPLLNTSVLLASGVSITWAHHSLM). Residues 153-155 (EGN) lie on the Mitochondrial matrix side of the membrane. The helical transmembrane segment at 156–183 (RNHMLQALFITIALGVYFTLLQASEYYE) threads the bilayer. The Mitochondrial intermembrane segment spans residues 184–190 (APFTISD). The helical transmembrane segment at 191–223 (GVYGSTFFVATGFHGLHVIIGSTFLIVCFFRQL) threads the bilayer. Residues 224–232 (KFHFTSNHH) lie on the Mitochondrial matrix side of the membrane. Residues 233-256 (FGFEAAAWYWHFVDVVWLFLYVSI) form a helical membrane-spanning segment. Topologically, residues 257 to 261 (YWWGS) are mitochondrial intermembrane.

Belongs to the cytochrome c oxidase subunit 3 family. As to quaternary structure, component of the cytochrome c oxidase (complex IV, CIV), a multisubunit enzyme composed of 14 subunits. The complex is composed of a catalytic core of 3 subunits MT-CO1, MT-CO2 and MT-CO3, encoded in the mitochondrial DNA, and 11 supernumerary subunits COX4I, COX5A, COX5B, COX6A, COX6B, COX6C, COX7A, COX7B, COX7C, COX8 and NDUFA4, which are encoded in the nuclear genome. The complex exists as a monomer or a dimer and forms supercomplexes (SCs) in the inner mitochondrial membrane with NADH-ubiquinone oxidoreductase (complex I, CI) and ubiquinol-cytochrome c oxidoreductase (cytochrome b-c1 complex, complex III, CIII), resulting in different assemblies (supercomplex SCI(1)III(2)IV(1) and megacomplex MCI(2)III(2)IV(2)).

It is found in the mitochondrion inner membrane. It carries out the reaction 4 Fe(II)-[cytochrome c] + O2 + 8 H(+)(in) = 4 Fe(III)-[cytochrome c] + 2 H2O + 4 H(+)(out). Functionally, component of the cytochrome c oxidase, the last enzyme in the mitochondrial electron transport chain which drives oxidative phosphorylation. The respiratory chain contains 3 multisubunit complexes succinate dehydrogenase (complex II, CII), ubiquinol-cytochrome c oxidoreductase (cytochrome b-c1 complex, complex III, CIII) and cytochrome c oxidase (complex IV, CIV), that cooperate to transfer electrons derived from NADH and succinate to molecular oxygen, creating an electrochemical gradient over the inner membrane that drives transmembrane transport and the ATP synthase. Cytochrome c oxidase is the component of the respiratory chain that catalyzes the reduction of oxygen to water. Electrons originating from reduced cytochrome c in the intermembrane space (IMS) are transferred via the dinuclear copper A center (CU(A)) of subunit 2 and heme A of subunit 1 to the active site in subunit 1, a binuclear center (BNC) formed by heme A3 and copper B (CU(B)). The BNC reduces molecular oxygen to 2 water molecules using 4 electrons from cytochrome c in the IMS and 4 protons from the mitochondrial matrix. The polypeptide is Cytochrome c oxidase subunit 3 (MT-CO3) (Eudorcas rufifrons (Red-fronted gazelle)).